Here is a 487-residue protein sequence, read N- to C-terminus: L-tartrate/succinate antiporter (487 aa).

A run of 14 helical transmembrane segments spans residues 10–30 (YLAPLAVIAIIALLPVPAGLE), 33–53 (TWLYFAVFTGVIVGLILEPVP), 54–74 (GAVVAMVGISIIAILSPWLLF), 93–113 (WAVSGFSNSVIWLIFAAFMFG), 137–157 (TLFLGYAVMFSELILAPVTPS), 189–209 (IGSYIMWMGIVADCVTSAIFL), 236–256 (FLGMLPLSILLVLLVPWLAYV), 292–312 (LMVGALVLWIFGGDYIDAAMV), 313–333 (GYSVVALMLLLRIISWDDIVS), 340–360 (VFFWLASLITLATGLNNTGFI), 370–390 (SLSGYSPTMVMVTLIVVFYLL), 393–413 (FFASATAYTCALAPMMIAAAL), 418–438 (IPLPVFCLMVGAAIGLGSILT), and 465–485 (IFGLIFLVLLVITGLLWMPVV).

It belongs to the SLC13A/DASS transporter (TC 2.A.47) family. DIT1 subfamily.

It is found in the cell inner membrane. The catalysed reaction is (2R,3R)-tartrate(out) + succinate(in) = (2R,3R)-tartrate(in) + succinate(out). In terms of biological role, catalyzes the uptake of tartrate in exchange for intracellular succinate. Essential for anaerobic L-tartrate fermentation. This chain is L-tartrate/succinate antiporter (ttdT), found in Shigella flexneri.